Here is a 996-residue protein sequence, read N- to C-terminus: MYLLFLFLLFPTVFSLNQDGFILQQVKLSLDDPDSYLSSWNSNDASPCRWSGVSCAGDFSSVTSVDLSSANLAGPFPSVICRLSNLAHLSLYNNSINSTLPLNIAACKSLQTLDLSQNLLTGELPQTLADIPTLVHLDLTGNNFSGDIPASFGKFENLEVLSLVYNLLDGTIPPFLGNISTLKMLNLSYNPFSPSRIPPEFGNLTNLEVMWLTECHLVGQIPDSLGQLSKLVDLDLALNDLVGHIPPSLGGLTNVVQIELYNNSLTGEIPPELGNLKSLRLLDASMNQLTGKIPDELCRVPLESLNLYENNLEGELPASIALSPNLYEIRIFGNRLTGGLPKDLGLNSPLRWLDVSENEFSGDLPADLCAKGELEELLIIHNSFSGVIPESLADCRSLTRIRLAYNRFSGSVPTGFWGLPHVNLLELVNNSFSGEISKSIGGASNLSLLILSNNEFTGSLPEEIGSLDNLNQLSASGNKFSGSLPDSLMSLGELGTLDLHGNQFSGELTSGIKSWKKLNELNLADNEFTGKIPDEIGSLSVLNYLDLSGNMFSGKIPVSLQSLKLNQLNLSYNRLSGDLPPSLAKDMYKNSFIGNPGLCGDIKGLCGSENEAKKRGYVWLLRSIFVLAAMVLLAGVAWFYFKYRTFKKARAMERSKWTLMSFHKLGFSEHEILESLDEDNVIGAGASGKVYKVVLTNGETVAVKRLWTGSVKETGDCDPEKGYKPGVQDEAFEAEVETLGKIRHKNIVKLWCCCSTRDCKLLVYEYMPNGSLGDLLHSSKGGMLGWQTRFKIILDAAEGLSYLHHDSVPPIVHRDIKSNNILIDGDYGARVADFGVAKAVDLTGKAPKSMSVIAGSCGYIAPEYAYTLRVNEKSDIYSFGVVILEIVTRKRPVDPELGEKDLVKWVCSTLDQKGIEHVIDPKLDSCFKEEISKILNVGLLCTSPLPINRPSMRRVVKMLQEIGGGDEDSLHKIRDDKDGKLTPYYNEDTSDQGSIA.

An N-terminal signal peptide occupies residues 1–15 (MYLLFLFLLFPTVFS). The Extracellular segment spans residues 16–618 (LNQDGFILQQ…ENEAKKRGYV (603 aa)). LRR repeat units follow at residues 59-83 (FSSV…ICRL), 84-107 (SNLA…IAAC), 109-131 (SLQT…LADI), 133-154 (TLVH…SFGK), 155-178 (FENL…FLGN), 179-203 (ISTL…EFGN), 205-228 (TNLE…LGQL), 229-252 (SKLV…LGGL), 253-276 (TNVV…LGNL), 278-299 (SLRL…ELCR), 300-323 (VPLE…IALS), 325-347 (NLYE…LGLN), 348-371 (SPLR…LCAK), 373-395 (ELEE…LADC), 396-419 (RSLT…FWGL), 421-443 (HVNL…IGGA), 444-467 (SNLS…IGSL), 468-491 (DNLN…LMSL), 493-515 (ELGT…IKSW), 516-539 (KKLN…IGSL), 541-562 (VLNY…SLQS), and 563-586 (LKLN…LAKD). 2 N-linked (GlcNAc...) asparagine glycosylation sites follow: Asn-93 and Asn-97. N-linked (GlcNAc...) asparagine glycosylation is found at Asn-143, Asn-178, Asn-186, and Asn-203. Asn-262 is a glycosylation site (N-linked (GlcNAc...) asparagine). Asn-429 and Asn-445 each carry an N-linked (GlcNAc...) asparagine glycan. The N-linked (GlcNAc...) asparagine glycan is linked to Asn-569. The helical transmembrane segment at 619–639 (WLLRSIFVLAAMVLLAGVAWF) threads the bilayer. The Cytoplasmic segment spans residues 640–996 (YFKYRTFKKA…EDTSDQGSIA (357 aa)). The region spanning 676-962 (LDEDNVIGAG…RRVVKMLQEI (287 aa)) is the Protein kinase domain. ATP-binding positions include 682-690 (IGAGASGKV) and Lys-704. A phosphotyrosine mark is found at Tyr-764 and Tyr-802. Asp-815 (proton acceptor) is an active-site residue. Ser-851 carries the phosphoserine modification. Tyr-859 and Tyr-866 each carry phosphotyrosine. Thr-867 is modified (phosphothreonine). Residues 967–996 (EDSLHKIRDDKDGKLTPYYNEDTSDQGSIA) are disordered. The segment covering 968–980 (DSLHKIRDDKDGK) has biased composition (basic and acidic residues).

This sequence belongs to the protein kinase superfamily. Ser/Thr protein kinase family.

The protein localises to the cell membrane. It catalyses the reaction L-seryl-[protein] + ATP = O-phospho-L-seryl-[protein] + ADP + H(+). The enzyme catalyses L-threonyl-[protein] + ATP = O-phospho-L-threonyl-[protein] + ADP + H(+). In Arabidopsis thaliana (Mouse-ear cress), this protein is Receptor-like protein kinase HSL1 (HSL1).